The sequence spans 254 residues: L-rhamnose 1-dehydrogenase (NAD(P)(+)) (254 aa).

Glycine 13, serine 15, isoleucine 18, aspartate 64, valine 65, and asparagine 91 together coordinate NADP(+). Residue serine 144 is the Proton donor of the active site. Positions 144, 146, 154, and 157 each coordinate beta-L-rhamnose. Tyrosine 157 and lysine 161 together coordinate NADP(+). Tyrosine 157 (proton acceptor) is an active-site residue. Lysine 161 acts as the Lowers pKa of active site Tyr in catalysis. Residue threonine 189 participates in beta-L-rhamnose binding. Isoleucine 190 contributes to the NADP(+) binding site. A beta-L-rhamnose-binding site is contributed by asparagine 195.

Belongs to the short-chain dehydrogenases/reductases (SDR) family.

It carries out the reaction L-rhamnofuranose + NAD(+) = L-rhamnono-1,4-lactone + NADH + H(+). It catalyses the reaction L-rhamnofuranose + NADP(+) = L-rhamnono-1,4-lactone + NADPH + H(+). It participates in carbohydrate degradation; L-rhamnose degradation. Functionally, NAD(P)-dependent dehydrogenase that catalyzes the oxidation of L-rhamnose to L-rhamnono-1,4-lactone. Also shows high activity with L-lyxose and low activity with L-mannose. Can utilize either NAD(+) or NADP(+), with a slight preference for NADP(+). Catalyzes the first step in an alternative pathway for rhamnose utilization that does not involve phosphorylated intermediates. This Sphingomonas sp. (strain SKA58) protein is L-rhamnose 1-dehydrogenase (NAD(P)(+)).